A 280-amino-acid chain; its full sequence is 2-dehydro-3-deoxyphosphooctonate aldolase (280 aa).

This sequence belongs to the KdsA family.

It localises to the cytoplasm. The catalysed reaction is D-arabinose 5-phosphate + phosphoenolpyruvate + H2O = 3-deoxy-alpha-D-manno-2-octulosonate-8-phosphate + phosphate. The protein operates within carbohydrate biosynthesis; 3-deoxy-D-manno-octulosonate biosynthesis; 3-deoxy-D-manno-octulosonate from D-ribulose 5-phosphate: step 2/3. It functions in the pathway bacterial outer membrane biogenesis; lipopolysaccharide biosynthesis. This is 2-dehydro-3-deoxyphosphooctonate aldolase from Neisseria gonorrhoeae (strain NCCP11945).